The following is a 207-amino-acid chain: Na(+)-translocating NADH-quinone reductase subunit D (207 aa).

The next 6 helical transmembrane spans lie at Ile20 to Ala40, Phe41 to Ile61, Ile69 to Leu89, Val102 to Met122, Phe130 to Leu150, and Asn177 to Ile197.

This sequence belongs to the NqrDE/RnfAE family. As to quaternary structure, composed of six subunits; NqrA, NqrB, NqrC, NqrD, NqrE and NqrF.

The protein resides in the cell inner membrane. It carries out the reaction a ubiquinone + n Na(+)(in) + NADH + H(+) = a ubiquinol + n Na(+)(out) + NAD(+). Functionally, NQR complex catalyzes the reduction of ubiquinone-1 to ubiquinol by two successive reactions, coupled with the transport of Na(+) ions from the cytoplasm to the periplasm. NqrA to NqrE are probably involved in the second step, the conversion of ubisemiquinone to ubiquinol. In Haemophilus ducreyi (strain 35000HP / ATCC 700724), this protein is Na(+)-translocating NADH-quinone reductase subunit D.